We begin with the raw amino-acid sequence, 381 residues long: Transcription termination factor 4, mitochondrial (381 aa).

The transit peptide at 1-42 directs the protein to the mitochondrion; the sequence is MAAFGRQVLDWHRLIPLTWACMARQTPHLGEQRRTTASLLRK. MTERF repeat units follow at residues 142–172, 177–204, 209–239, 245–270, and 290–318; these read CVVLKKSPQLLKLPIMQMRKRSSYLQKLGLG, KRVLYCCPEIFTMRQQDINDTVRLLKEK, VQQVTKILHSCPSVLREDLGQLEYKFQYAYF, HPDIVKSEYLQYSLTKIKQRHIYLER, and LKDILRVSEAEFLARTACTSVEEFQVFKK. The segment at 310 to 327 is dimerization with NSUN4; the sequence is VEEFQVFKKLLAREEEES. Positions 322–381 are disordered; sequence REEEESESSTSDDKRASLDEDEDDDDEEDNDEDDNDEDDDDEDDDEAEDNDEDEDDDEEE. A compositionally biased stretch (acidic residues) spans 340 to 381; it reads DEDEDDDDEEDNDEDDNDEDDDDEDDDEAEDNDEDEDDDEEE.

The protein belongs to the mTERF family. In terms of assembly, heterodimer with NSUN4; this interaction may be required for NSUN4 recruitment to the mitochondrial large ribosomal subunit. In terms of processing, the mature mitochondrial protein exists in 2 forms differing at the level of their N-terminus, one is starting at residue 43 and the other at residue 48.

It is found in the mitochondrion. Regulator of mitochondrial ribosome biogenesis and translation. Binds to mitochondrial ribosomal RNAs 16S, 12S and 7S and targets NSUN4 RNA methyltransferase to the mitochondrial large ribosomal subunit (39S). This Homo sapiens (Human) protein is Transcription termination factor 4, mitochondrial (MTERF4).